The primary structure comprises 425 residues: Serine--tRNA ligase (425 aa).

Position 232-234 (232-234 (TSE)) interacts with L-serine. ATP contacts are provided by residues 263–265 (RRE) and Val279. Position 286 (Glu286) interacts with L-serine. 350–353 (EVVS) is a binding site for ATP. Thr387 serves as a coordination point for L-serine.

Belongs to the class-II aminoacyl-tRNA synthetase family. Type-1 seryl-tRNA synthetase subfamily. As to quaternary structure, homodimer. The tRNA molecule binds across the dimer.

The protein resides in the cytoplasm. It carries out the reaction tRNA(Ser) + L-serine + ATP = L-seryl-tRNA(Ser) + AMP + diphosphate + H(+). The enzyme catalyses tRNA(Sec) + L-serine + ATP = L-seryl-tRNA(Sec) + AMP + diphosphate + H(+). It participates in aminoacyl-tRNA biosynthesis; selenocysteinyl-tRNA(Sec) biosynthesis; L-seryl-tRNA(Sec) from L-serine and tRNA(Sec): step 1/1. Catalyzes the attachment of serine to tRNA(Ser). Is also able to aminoacylate tRNA(Sec) with serine, to form the misacylated tRNA L-seryl-tRNA(Sec), which will be further converted into selenocysteinyl-tRNA(Sec). In Methanoregula boonei (strain DSM 21154 / JCM 14090 / 6A8), this protein is Serine--tRNA ligase.